A 264-amino-acid polypeptide reads, in one-letter code: Signal peptidase I (264 aa).

Topologically, residues 1-18 (MNRDNINSNKTVKQEFGS) are cytoplasmic. A helical transmembrane segment spans residues 19–39 (FAFVICIALVIRILIMEPFTV). Over 40 to 264 (PTGSMKATIL…IFKNLYNVDE (225 aa)) the chain is Extracellular. Active-site residues include serine 43 and lysine 106.

It belongs to the peptidase S26 family.

It is found in the cell membrane. It catalyses the reaction Cleavage of hydrophobic, N-terminal signal or leader sequences from secreted and periplasmic proteins.. The sequence is that of Signal peptidase I (lepB) from Rickettsia prowazekii (strain Madrid E).